The chain runs to 394 residues: Phosphopentomutase (394 aa).

Mn(2+)-binding residues include D14, D287, H292, D328, H329, and H340.

The protein belongs to the phosphopentomutase family. Mn(2+) is required as a cofactor.

The protein resides in the cytoplasm. The catalysed reaction is 2-deoxy-alpha-D-ribose 1-phosphate = 2-deoxy-D-ribose 5-phosphate. It catalyses the reaction alpha-D-ribose 1-phosphate = D-ribose 5-phosphate. It functions in the pathway carbohydrate degradation; 2-deoxy-D-ribose 1-phosphate degradation; D-glyceraldehyde 3-phosphate and acetaldehyde from 2-deoxy-alpha-D-ribose 1-phosphate: step 1/2. In terms of biological role, isomerase that catalyzes the conversion of deoxy-ribose 1-phosphate (dRib-1-P) and ribose 1-phosphate (Rib-1-P) to deoxy-ribose 5-phosphate (dRib-5-P) and ribose 5-phosphate (Rib-5-P), respectively. The chain is Phosphopentomutase from Shouchella clausii (strain KSM-K16) (Alkalihalobacillus clausii).